The primary structure comprises 353 residues: ATP-dependent (S)-NAD(P)H-hydrate dehydratase (353 aa).

The YjeF C-terminal domain maps to 18 to 345 (MLARVRQMVP…DEVHTAFLNL (328 aa)). The tract at residues 95–121 (RSSPPALSSSDSGSSPSRTKSAPDTDP) is disordered. The span at 96 to 114 (SSPPALSSSDSGSSPSRTK) shows a compositional bias: low complexity. (6S)-NADPHX contacts are provided by residues glycine 143 and 196–202 (NVVEFGR). Residues 241–245 (KGAKD) and 260–269 (GGLKRSGGQG) each bind ATP. (6S)-NADPHX is bound at residue aspartate 270.

This sequence belongs to the NnrD/CARKD family. Mg(2+) serves as cofactor.

Its subcellular location is the cytoplasm. The catalysed reaction is (6S)-NADHX + ATP = ADP + phosphate + NADH + H(+). It carries out the reaction (6S)-NADPHX + ATP = ADP + phosphate + NADPH + H(+). In terms of biological role, catalyzes the dehydration of the S-form of NAD(P)HX at the expense of ATP, which is converted to ADP. Together with NAD(P)HX epimerase, which catalyzes the epimerization of the S- and R-forms, the enzyme allows the repair of both epimers of NAD(P)HX, a damaged form of NAD(P)H that is a result of enzymatic or heat-dependent hydration. The protein is ATP-dependent (S)-NAD(P)H-hydrate dehydratase of Neurospora crassa (strain ATCC 24698 / 74-OR23-1A / CBS 708.71 / DSM 1257 / FGSC 987).